Reading from the N-terminus, the 367-residue chain is Alanine racemase (367 aa).

K40 serves as the catalytic Proton acceptor; specific for D-alanine. K40 carries the N6-(pyridoxal phosphate)lysine modification. Residue R136 coordinates substrate. Y263 functions as the Proton acceptor; specific for L-alanine in the catalytic mechanism. M310 is a substrate binding site.

Belongs to the alanine racemase family. It depends on pyridoxal 5'-phosphate as a cofactor.

It carries out the reaction L-alanine = D-alanine. Its pathway is amino-acid biosynthesis; D-alanine biosynthesis; D-alanine from L-alanine: step 1/1. Its function is as follows. Catalyzes the interconversion of L-alanine and D-alanine. May also act on other amino acids. In Streptococcus suis (strain 98HAH33), this protein is Alanine racemase (alr).